The sequence spans 450 residues: UDP-N-acetylglucosamine--peptide N-acetylglucosaminyltransferase stabilizing protein GtfB (450 aa).

It belongs to the GtfB family. In terms of assembly, forms a heterotetramer with 2 subunits each of GtfA and GtfB. Part of the accessory SecA2/SecY2 protein translocation apparatus required to export cell wall protein GspB.

The protein localises to the cell membrane. Its pathway is protein modification; protein glycosylation. Required for polymorphic O-glycosylation of GspB, a serine-rich repeat cell wall protein encoded upstream in the same operon. A substrate-binding protein that is part of the accessory SecA2/SecY2 system specifically required to export GspB. The GtfA-GtfB complex adds GlcNAc from UDP-GlcNAc to GspB, attaching the first sugar residue. Upon coexpression in E.coli with GtfA glycosylates GspB constructs. Binds the GspB protein substrate; alone this subunit only recognizes partially glycosylated GspB, but is constrained by GtfA to also recognize unglycosylated protein. The enzyme probably modifies its tertiary conformation by opening and closing its intersubunit interfaces to accomodate the increasingly glycosylated substrate. The protein is UDP-N-acetylglucosamine--peptide N-acetylglucosaminyltransferase stabilizing protein GtfB of Streptococcus gordonii.